Here is a 652-residue protein sequence, read N- to C-terminus: Forkhead box protein O1 (652 aa).

2 disordered regions span residues 1–62 (MAEA…ASAS) and 112–154 (VHPA…SSRR). Thr-24 is modified (phosphothreonine; by PKB/AKT1 or PKB/AKT2 and SGK1). A compositionally biased stretch (low complexity) spans 35 to 62 (SNSTTSSPAPSGGAAANPDAAASLASAS). The span at 114 to 133 (PAPPQPPPTGPLSQPPPVPP) shows a compositional bias: pro residues. The span at 134 to 146 (SAAAAAGPLAGQP) shows a compositional bias: low complexity. Residues 156–232 (AWGNLSYADL…VQNEGTGKSS (77 aa)) constitute a DNA-binding region (fork-head). 2 DNA-binding regions span residues 208 to 215 (NSIRHNLS) and 231 to 234 (SSWW). At Ser-209 the chain carries Phosphoserine; by STK4/MST1. Phosphoserine is present on residues Ser-215, Ser-231, and Ser-232. Disordered regions lie at residues 231–342 (SSWW…DVHS) and 383–410 (SLTVSTQSSPGSMMQQTPCYSFAPPNTS). N6-acetyllysine occurs at positions 242 and 245. The residue at position 246 (Ser-246) is a Phosphoserine; by CDK1. 2 positions are modified to omega-N-methylarginine; by PRMT1: Arg-248 and Arg-250. The Nuclear localization signal motif lies at 248–250 (RRR). A Phosphoserine; by PKB/AKT1 and SGK1 modification is found at Ser-253. N6-acetyllysine is present on residues Lys-259, Lys-262, and Lys-271. Residues 261-272 (AKSRGRAAKKKA) show a composition bias toward basic residues. A sufficient for interaction with NLK region spans residues 280–562 (GPGDSPGSQF…TPVKTPLQVP (283 aa)). A phosphoserine mark is found at Ser-284 and Ser-295. Over residues 306-323 (NWSTFRPRTSSNASTISG) the composition is skewed to polar residues. Ser-316 carries the post-translational modification Phosphoserine; by PKB/AKT1 or PKB/AKT2. Ser-319 carries the phosphoserine; by CK1 and SGK1 modification. Ser-322 is subject to Phosphoserine; by CK1. Ser-326 bears the Phosphoserine mark. Phosphothreonine is present on Thr-330. The interval 360–456 (SEISNPENME…GGLNQYNCAP (97 aa)) is required for interaction with RUNX2. The segment covering 392 to 401 (PGSMMQQTPC) has biased composition (polar residues). Lys-420 bears the N6-acetyllysine mark. The Required for interaction with SIRT1 signature appears at 459–463 (LKELL).

As to quaternary structure, interacts with EP300 and CREBBP; the interactions acetylate FOXO1. Interacts with the 14-3-3 proteins, YWHAG and YWHAZ; the interactions require insulin-stimulated phosphorylation on Thr-24, promote nuclear exit and loss of transcriptional activity. Interacts with SKP2; the interaction ubiquitinates FOXO1 leading to its proteasomal degradation. Interacts with PMRT1; methylates FOXO1, prevents PKB/AKT1 phosphorylation and retains FOXO1 in the nucleus. Interacts (via an N-terminal domain) with FCOR; the interaction is direct, occurs in a forskolin-independent manner and prevents SIRT1 binding to FOXO1. Interacts (via the C-terminal half) with ATF4 (via its DNA-binding domain); the interaction occurs in osteoblasts, regulates glucose homeostasis via suppression of beta-cell proliferation and subsequent decrease in insulin production. Interacts with RUNX2; the interaction inhibits RUNX2 transcriptional activity and mediates the IGF1/insulin-dependent BGLAP expression in osteoblasts. Interacts with PPP2R1A; the interaction regulates the dephosphorylation of FOXO1 at Thr-24 and Ser-253 leading to its nuclear import. Binds to CDK1. Interacts with LRPPRC. Interacts with RUNX2; the interaction inhibits RUNX2 transcriptional activity and mediates the IGF1/insulin-dependent BGLAP expression in osteoblasts. Interacts with NLK. Interacts with SIRT1; the interaction results in the deacetylation of FOXO1 leading to activation of FOXO1-mediated transcription of genes involved in DNA repair and stress resistance. The interaction requires the presence of KRIT1 and is inhibited by FCOR. Interacts with SIRT2; the interaction is disrupted in response to oxidative stress or serum deprivation, leading to increased level of acetylated FOXO1, which promotes stress-induced autophagy by stimulating E1-like activating enzyme ATG7. Interacts (acetylated form) with ATG7; the interaction is increased in response to oxidative stress or serum deprivation and promotes the autophagic process leading to cell death. Interacts (acetylated form) with PPARG. Interacts with XBP1 isoform 2; this interaction is direct and leads to FOXO1 ubiquitination and degradation via the proteasome pathway. Interacts (via the Fork-head domain) with CEBPA; the interaction increases when FOXO1 is deacetylated. Interacts with WDFY2. Forms a complex with WDFY2 and AKT1. Interacts with CRY1. Interacts with PPIA/CYPA; the interaction promotes FOXO1 dephosphorylation, nuclear accumulation and transcriptional activity. Interacts with TOX4; FOXO1 is required for full induction of TOX4-dependent activity and the interaction is inhibited by insulin. Interacts (when phosphorylated on Ser-253) with STUB1/CHIP. Phosphorylation by NLK promotes nuclear export and inhibits the transcriptional activity. In response to growth factors, phosphorylation on Thr-24, Ser-253 and Ser-319 by PKB/AKT1 promotes nuclear export and inactivation of transactivational activity. Phosphorylation on Thr-24 is required for binding 14-3-3 proteins. Phosphorylation of Ser-253 decreases DNA-binding activity and promotes the phosphorylation of Thr-24 and Ser-316, permitting phosphorylation of Ser-319 and Ser-322, probably by CDK1, leading to nuclear exclusion and loss of function. Stress signals, such as response to oxygen or nitric oxide, attenuate the PKB/AKT1-mediated phosphorylation leading to nuclear retention. Phosphorylation of Ser-326 is independent of IGF1 and leads to reduced function. Dephosphorylated on Thr-24 and Ser-253 by PP2A in beta-cells under oxidative stress leading to nuclear retention. Phosphorylation of Ser-246 by CDK1 disrupts binding of 14-3-3 proteins leading to nuclear accumulation and has no effect on DNA-binding nor transcriptional activity. Phosphorylation by STK4/MST1 on Ser-209, upon oxidative stress, inhibits binding to 14-3-3 proteins and nuclear export. PPIA/CYPA promotes its dephosphorylation on Ser-253. Post-translationally, ubiquitinated by SKP2. Ubiquitinated, leading to proteasomal degradation. Ubiquitinated by STUB1/CHIP; when Ser-253 is phosphorylated. In terms of processing, methylation inhibits PKB/AKT1-mediated phosphorylation at Ser-253, promoting nuclear retention and increasing the transcriptional activity and cell death. Methylation increased by oxidative stress. Acetylation at Lys-259 and Lys-271 are necessary for autophagic cell death induction. Deacetylated by SIRT2 in response to oxidative stress or serum deprivation, thereby negatively regulating FOXO1-mediated autophagic cell death. Once in the nucleus, acetylated by CREBBP/EP300. Acetylation diminishes the interaction with target DNA and attenuates the transcriptional activity. It increases the phosphorylation at Ser-253, and is required for the transcriptional inhibition by FCOR. Deacetylation by SIRT1 results in reactivation of the transcriptional activity. Acetylation of FOXO1 diminishes its binding to PPARG in adipocytes. Deacetylated by SIRT2; deacetylation of FOXO1 directly increases its repressive binding to PPARG and inhibits adipocyte differentiation. Oxidative stress by hydrogen peroxide treatment appears to promote deacetylation and uncoupling of insulin-induced phosphorylation. By contrast, resveratrol acts independently of acetylation. Acetylated at Lys-420, promoting its localization to the nucleus and transcription factor activity. Deacetylation at Lys-420 by SIRT6, promotes its translocation into the cytoplasm, preventing its transcription factor activity. Deacetylation and subsequent inhibition by SIRT6 has different effects depending on cell types: it inhibits gluconeogenesis in hepatocytes, promotes glucose sensing in pancreatic beta-cells and regulates lipid catabolism in brown adipocytes. Expressed in liver, white and brown adipose tissues (at protein level).

It localises to the cytoplasm. It is found in the nucleus. Its function is as follows. Transcription factor that is the main target of insulin signaling and regulates metabolic homeostasis in response to oxidative stress. Binds to the insulin response element (IRE) with consensus sequence 5'-TT[G/A]TTTTG-3' and the related Daf-16 family binding element (DBE) with consensus sequence 5'-TT[G/A]TTTAC-3'. Activity suppressed by insulin. Main regulator of redox balance and osteoblast numbers and controls bone mass. Orchestrates the endocrine function of the skeleton in regulating glucose metabolism. Also acts as a key regulator of chondrogenic commitment of skeletal progenitor cells in response to lipid availability: when lipids levels are low, translocates to the nucleus and promotes expression of SOX9, which induces chondrogenic commitment and suppresses fatty acid oxidation. Acts synergistically with ATF4 to suppress osteocalcin/BGLAP activity, increasing glucose levels and triggering glucose intolerance and insulin insensitivity. Also suppresses the transcriptional activity of RUNX2, an upstream activator of osteocalcin/BGLAP. Acts as an inhibitor of glucose sensing in pancreatic beta cells by acting as a transcription repressor and suppressing expression of PDX1. In hepatocytes, promotes gluconeogenesis by acting together with PPARGC1A and CEBPA to activate the expression of genes such as IGFBP1, G6PC1 and PCK1. Also promotes gluconeogenesis by directly promoting expression of PPARGC1A and G6PC1. Important regulator of cell death acting downstream of CDK1, PKB/AKT1 and STK4/MST1. Promotes neural cell death. Mediates insulin action on adipose tissue. Regulates the expression of adipogenic genes such as PPARG during preadipocyte differentiation and, adipocyte size and adipose tissue-specific gene expression in response to excessive calorie intake. Regulates the transcriptional activity of GADD45A and repair of nitric oxide-damaged DNA in beta-cells. Required for the autophagic cell death induction in response to starvation or oxidative stress in a transcription-independent manner. Mediates the function of MLIP in cardiomyocytes hypertrophy and cardiac remodeling. Positive regulator of apoptosis in cardiac smooth muscle cells as a result of its transcriptional activation of pro-apoptotic genes. Regulates endothelial cell (EC) viability and apoptosis in a PPIA/CYPA-dependent manner via transcription of CCL2 and BCL2L11 which are involved in EC chemotaxis and apoptosis. The polypeptide is Forkhead box protein O1 (Foxo1) (Mus musculus (Mouse)).